Consider the following 42-residue polypeptide: Large ribosomal subunit protein bL36 (42 aa).

This sequence belongs to the bacterial ribosomal protein bL36 family.

This Anaplasma phagocytophilum (strain HZ) protein is Large ribosomal subunit protein bL36.